We begin with the raw amino-acid sequence, 1032 residues long: Vacuolar membrane protease (1032 aa).

At 1–11 (MKLGNPFVFRP) the chain is on the cytoplasmic side. A helical membrane pass occupies residues 12–32 (GPVSFWTTIVYLAIIIPLIYV). At 33–415 (QETVPPAPSE…SAFALRGLFA (383 aa)) the chain is on the vacuolar side. Asparagine 50, asparagine 138, and asparagine 147 each carry an N-linked (GlcNAc...) asparagine glycan. Zn(2+) is bound by residues histidine 194 and aspartate 206. The Proton acceptor role is filled by glutamate 240. Zn(2+) contacts are provided by glutamate 241, glutamate 266, and histidine 339. A helical membrane pass occupies residues 416-436 (WTLTLLITTPLVLFVVTYLLV). The Cytoplasmic segment spans residues 437–469 (RDDKWYFFATKVDSTVGDGEETVSFGGWKGFVR). The chain crosses the membrane as a helical span at residues 470 to 490 (FPFALVVATALTIGSVFLLAK). Over 491-493 (VNP) the chain is Vacuolar. Residues 494-514 (LIIYSSGYSVWAMMISLFYFV) form a helical membrane-spanning segment. Residues 515-532 (SWLLLRGAHFVRPSALQR) are Cytoplasmic-facing. A helical membrane pass occupies residues 533–553 (GFTLIWLFIITWVLSVFAAVA). Residues 554-560 (EDRMNMG) are Vacuolar-facing. The helical transmembrane segment at 561-581 (AVYPLAFLHTFAFAAVLISLL) threads the bilayer. The Cytoplasmic portion of the chain corresponds to 582–701 (EQYALPAKQD…WSGRLPTWTW (120 aa)). The segment at 595-688 (QVSGENEEEE…RKRSFPPYEN (94 aa)) is disordered. The segment covering 599–608 (ENEEEEEQEQ) has biased composition (acidic residues). Over residues 651 to 660 (SSEQTTTFAN) the composition is skewed to polar residues. The helical transmembrane segment at 702-722 (FIQLLLLVPLYVTVLGNLALV) threads the bilayer. Residues 723–738 (QTTSIGKTGTDGSSLL) are Vacuolar-facing. A helical transmembrane segment spans residues 739 to 759 (APLMGVGILAILLLLPLTPFI). The Cytoplasmic segment spans residues 760–766 (HRVSHHV). A helical membrane pass occupies residues 767–787 (PLFLFLVFIGTLIYNLTAFPF). The Vacuolar segment spans residues 788-1032 (SDNNRFKFYF…VEITKKIKVA (245 aa)). Asparagine 940 carries an N-linked (GlcNAc...) asparagine glycan.

It belongs to the peptidase M28 family. Zn(2+) is required as a cofactor.

The protein localises to the vacuole membrane. Functionally, may be involved in vacuolar sorting and osmoregulation. The sequence is that of Vacuolar membrane protease from Metarhizium robertsii (strain ARSEF 23 / ATCC MYA-3075) (Metarhizium anisopliae (strain ARSEF 23)).